The sequence spans 72 residues: uncharacterized protein (72 aa).

The protein localises to the cytoplasm. It is found in the nucleus. This is an uncharacterized protein from Saccharomyces cerevisiae (strain ATCC 204508 / S288c) (Baker's yeast).